The primary structure comprises 789 residues: Glycerol-3-phosphate acyltransferase (789 aa).

The short motif at 275-280 (SHRSYI) is the HXXXXD motif element.

Belongs to the GPAT/DAPAT family.

Its subcellular location is the cell membrane. It carries out the reaction sn-glycerol 3-phosphate + an acyl-CoA = a 1-acyl-sn-glycero-3-phosphate + CoA. Its pathway is phospholipid metabolism; CDP-diacylglycerol biosynthesis; CDP-diacylglycerol from sn-glycerol 3-phosphate: step 1/3. This chain is Glycerol-3-phosphate acyltransferase, found in Mycobacterium bovis (strain BCG / Pasteur 1173P2).